A 202-amino-acid chain; its full sequence is Small ribosomal subunit protein uS4 (202 aa).

Residues 91 to 157 (CRLDNVVYRA…TPFIVARETH (67 aa)) enclose the S4 RNA-binding domain.

This sequence belongs to the universal ribosomal protein uS4 family. Part of the 30S ribosomal subunit. Contacts protein S5. The interaction surface between S4 and S5 is involved in control of translational fidelity.

Its function is as follows. One of the primary rRNA binding proteins, it binds directly to 16S rRNA where it nucleates assembly of the body of the 30S subunit. Functionally, with S5 and S12 plays an important role in translational accuracy. The polypeptide is Small ribosomal subunit protein uS4 (Nocardioides sp. (strain ATCC BAA-499 / JS614)).